The chain runs to 289 residues: Inorganic pyrophosphatase (289 aa).

An N-acetylserine modification is found at Ser2. Lys57 is modified (N6-acetyllysine). Mg(2+) contacts are provided by Asp116, Asp121, and Asp153. N6-acetyllysine is present on Lys228. The residue at position 250 (Ser250) is a Phosphoserine.

This sequence belongs to the PPase family. As to quaternary structure, homodimer. Requires Mg(2+) as cofactor.

The protein resides in the cytoplasm. It catalyses the reaction diphosphate + H2O = 2 phosphate + H(+). The sequence is that of Inorganic pyrophosphatase (PPA1) from Macaca fascicularis (Crab-eating macaque).